The primary structure comprises 481 residues: Ankyrin repeat, SAM and basic leucine zipper domain-containing protein 1 (481 aa).

The segment covering 1–10 has biased composition (low complexity); it reads MASGALRGLA. The interval 1–23 is disordered; the sequence is MASGALRGLAVAGGGESSDSEDD. 3 positions are modified to phosphoserine: Ser17, Ser18, and Ser20. ANK repeat units lie at residues 45-74, 78-107, 110-144, 148-177, 181-210, and 214-243; these read EKSE…SVDS, YGWT…NASF, DKQT…DPNI, RLMT…EVNA, NGYT…NKML, and DGKI…PLEG. The SAM domain maps to 272–334; it reads SYTAFGDLEI…KILSALKELE (63 aa).

In terms of assembly, interacts with DDX4, PIWIL1, RANBP9 and TDRD1.

The protein resides in the cytoplasm. Plays a central role during spermatogenesis by repressing transposable elements and preventing their mobilization, which is essential for the germline integrity. Acts via the piRNA metabolic process, which mediates the repression of transposable elements during meiosis by forming complexes composed of piRNAs and Piwi proteins and governs the methylation and subsequent repression of transposons. Its association with pi-bodies suggests a participation in the primary piRNAs metabolic process. Required prior to the pachytene stage to facilitate the production of multiple types of piRNAs, including those associated with repeats involved in the regulation of retrotransposons. May act by mediating protein-protein interactions during germ cell maturation. The sequence is that of Ankyrin repeat, SAM and basic leucine zipper domain-containing protein 1 (ASZ1) from Eulemur macaco macaco (Black lemur).